Here is a 2754-residue protein sequence, read N- to C-terminus: Neurobeachin-like protein 2 (2754 aa).

2 disordered regions span residues 1298-1338 and 1364-1438; these read TAGS…SEAP and SVGS…QQTS. Pro residues-rich tracts occupy residues 1301–1323 and 1388–1400; these read SPPP…PPTE and TPSP…PFPA. Residues 1425-1437 show a composition bias toward polar residues; it reads GDDTSNTSNPQQT. Residue S1647 is modified to Phosphoserine. T1867 carries the phosphothreonine modification. The BEACH-type PH domain maps to 1915-2040; sequence EQREKLVLSA…VRNQVYSWLL (126 aa). One can recognise a BEACH domain in the interval 2053 to 2345; it reads RSPQEMLRAS…QLLKEPHPTR (293 aa). WD repeat units follow at residues 2386–2424, 2448–2491, 2494–2531, 2544–2582, 2589–2631, 2639–2674, and 2682–2717; these read LVLA…SWLP, RLLS…ALPR, LLSQ…VWRL, KPVQ…IHTV, AALR…TYSL, KLRA…ILQL, and PPLP…VVAG. Phosphoserine occurs at positions 2739 and 2742.

This sequence belongs to the WD repeat neurobeachin family. In terms of tissue distribution, expressed in megakaryocytes.

Its subcellular location is the endoplasmic reticulum. In terms of biological role, probably involved in thrombopoiesis. Plays a role in the development or secretion of alpha-granules, that contain several growth factors important for platelet biogenesis. The protein is Neurobeachin-like protein 2 (NBEAL2) of Homo sapiens (Human).